Consider the following 355-residue polypeptide: Class E basic helix-loop-helix protein 22 (355 aa).

Disordered stretches follow at residues 34–90 (AFRS…GGGG) and 128–215 (GRGS…KEQK). 2 stretches are compositionally biased toward gly residues: residues 81 to 90 (GGGGASGGGG) and 185 to 207 (GGSGLPPGGPTSGGGSGGGGGGS). In terms of domain architecture, bHLH spans 216–270 (ALRLNINARERRRMHDLNDALDELRAVIPYAHSPSVRKLSKIATLLLAKNYILMQ).

As to quaternary structure, interacts with PRDM8. As to expression, brain-specific, with the highest expression in the cerebellum.

The protein resides in the nucleus. In terms of biological role, inhibits DNA binding of TCF3/E47 homodimers and TCF3 (E47)/NEUROD1 heterodimers and acts as a strong repressor of Neurod1 and Myod-responsive genes, probably by heterodimerization with class a basic helix-loop-helix factors. Despite the presence of an intact basic domain, does not bind to DNA. In the brain, may function as an area-specific transcription factor that regulates the postmitotic acquisition of area identities and elucidate the genetic hierarchy between progenitors and postmitotic neurons driving neocortical arealization. May be required for the survival of a specific population of inhibitory neurons in the superficial laminae of the spinal cord dorsal horn that may regulate pruritis. Seems to play a crucial role in the retinogenesis, in the specification of amacrine and bipolar subtypes. Forms with PRDM8 a transcriptional repressor complex controlling genes involved in neural development and neuronal differentiation. This is Class E basic helix-loop-helix protein 22 (Bhlhe22) from Mus musculus (Mouse).